Here is a 240-residue protein sequence, read N- to C-terminus: ATP-dependent dethiobiotin synthetase BioD (240 aa).

An ATP-binding site is contributed by 15-20; that stretch reads EIGKTF. T19 serves as a coordination point for Mg(2+). The active site involves K40. Residues D57, 118–121, and 178–179 contribute to the ATP site; these read EGVG and NR. Mg(2+) contacts are provided by D57 and E118.

It belongs to the dethiobiotin synthetase family. As to quaternary structure, homodimer. Mg(2+) serves as cofactor.

Its subcellular location is the cytoplasm. It catalyses the reaction (7R,8S)-7,8-diammoniononanoate + CO2 + ATP = (4R,5S)-dethiobiotin + ADP + phosphate + 3 H(+). It participates in cofactor biosynthesis; biotin biosynthesis; biotin from 7,8-diaminononanoate: step 1/2. Catalyzes a mechanistically unusual reaction, the ATP-dependent insertion of CO2 between the N7 and N8 nitrogen atoms of 7,8-diaminopelargonic acid (DAPA, also called 7,8-diammoniononanoate) to form a ureido ring. The protein is ATP-dependent dethiobiotin synthetase BioD of Burkholderia pseudomallei (strain K96243).